Here is a 508-residue protein sequence, read N- to C-terminus: MAASSSSSSSMASPRGRSIRETVLETVAAYHQQQRMRRKFRKSLSYAGELSSAGRARGEGGASSSASTTSLCGPDEDDEPFWEEEEGTVELVQLGANRAKNVLILMSDTGGGHRASAQAIKDPFRIEFGDDYRVFVKDLCKDHAGWPLNNMESSYKFMVKHVQLWKVAFHTTSPRWVHCFYLAALASFYAKKVEAGLKKYKPDIIISVHPLMQHIPLWVLKWQGLQNRVVFVTVITDLNTCHPTWFHADVNRCYCPSEEVAKRAALDDLQPSQIRVFGLPIRPSFCRAVLVKDDLRKELELDPELPAVLLMGGGEGMGPVKKTAKALGESLFDKELGKPIGQLIVICGRNKTLSSSLQALEWKIPIKVRGFETQMEKWMGACDCIITKAGPGTIAEALIRGLPIILNDFIPGQEVGNVPYVVDNGAGVFSKSSRETAKLVARWFGPDSDELKRMSEKALKLAQPEAVFDIVRDIHELSREQGVISQISSSLTSSFFIPSPETTPIQLM.

A chloroplast-targeting transit peptide spans 1-60 (MAASSSSSSSMASPRGRSIRETVLETVAAYHQQQRMRRKFRKSLSYAGELSSAGRARGEG). A disordered region spans residues 51–79 (SSAGRARGEGGASSSASTTSLCGPDEDDE).

This sequence belongs to the glycosyltransferase 28 family.

It localises to the plastid. Its subcellular location is the chloroplast membrane. The enzyme catalyses a 1,2-diacyl-sn-glycerol + UDP-alpha-D-galactose = a 1,2-diacyl-3-O-(beta-D-galactosyl)-sn-glycerol + UDP + H(+). In terms of biological role, involved in the synthesis of the major structural component of photosynthetic membranes. In Oryza sativa subsp. japonica (Rice), this protein is Probable monogalactosyldiacylglycerol synthase 3, chloroplastic (MGD3).